The primary structure comprises 71 residues: ATP synthase F(0) complex subunit e, mitochondrial (71 aa).

N6-acetyllysine is present on Lys34. Ser68 is modified (phosphoserine).

The protein belongs to the ATPase e subunit family. In terms of assembly, component of the ATP synthase complex composed at least of ATP5F1A/subunit alpha, ATP5F1B/subunit beta, ATP5MC1/subunit c (homooctomer), MT-ATP6/subunit a, MT-ATP8/subunit 8, ATP5ME/subunit e, ATP5MF/subunit f, ATP5MG/subunit g, ATP5MK/subunit k, ATP5MJ/subunit j, ATP5F1C/subunit gamma, ATP5F1D/subunit delta, ATP5F1E/subunit epsilon, ATP5PF/subunit F6, ATP5PB/subunit b, ATP5PD/subunit d, ATP5PO/subunit OSCP. ATP synthase complex consists of a soluble F(1) head domain (subunits alpha(3) and beta(3)) - the catalytic core - and a membrane F(0) domain - the membrane proton channel (subunits c, a, 8, e, f, g, k and j). These two domains are linked by a central stalk (subunits gamma, delta, and epsilon) rotating inside the F1 region and a stationary peripheral stalk (subunits F6, b, d, and OSCP).

Its subcellular location is the mitochondrion. It is found in the mitochondrion inner membrane. Functionally, subunit e, of the mitochondrial membrane ATP synthase complex (F(1)F(0) ATP synthase or Complex V) that produces ATP from ADP in the presence of a proton gradient across the membrane which is generated by electron transport complexes of the respiratory chain. ATP synthase complex consist of a soluble F(1) head domain - the catalytic core - and a membrane F(1) domain - the membrane proton channel. These two domains are linked by a central stalk rotating inside the F(1) region and a stationary peripheral stalk. During catalysis, ATP synthesis in the catalytic domain of F(1) is coupled via a rotary mechanism of the central stalk subunits to proton translocation. In vivo, can only synthesize ATP although its ATP hydrolase activity can be activated artificially in vitro. Part of the complex F(0) domain. This chain is ATP synthase F(0) complex subunit e, mitochondrial, found in Sus scrofa (Pig).